We begin with the raw amino-acid sequence, 346 residues long: N(4)-(beta-N-acetylglucosaminyl)-L-asparaginase (346 aa).

An N-terminal signal peptide occupies residues 1 to 23; the sequence is MERKSNLSLLLLLLVLGMPLVRG. A glycan (N-linked (GlcNAc...) asparagine) is linked at N38. 2 cysteine pairs are disulfide-bonded: C64–C69 and C163–C179. Catalysis depends on T206, which acts as the Nucleophile. Substrate contacts are provided by residues 234–237 and 257–260; these read RVGD and TGDG. Residues C286 and C306 are joined by a disulfide bond. N-linked (GlcNAc...) asparagine glycosylation is present at N310. Residues C317 and C345 are joined by a disulfide bond.

Belongs to the Ntn-hydrolase family. Heterotetramer of two alpha and two beta chains arranged as a dimer of alpha/beta heterodimers. In terms of processing, cleaved into an alpha and beta chain by autocatalysis; this activates the enzyme. The N-terminal residue of the beta subunit is responsible for the nucleophile hydrolase activity. N-glycosylated.

The protein localises to the lysosome. The enzyme catalyses N(4)-(beta-N-acetyl-D-glucosaminyl)-L-asparagine + H2O = N-acetyl-beta-D-glucosaminylamine + L-aspartate + H(+). Its function is as follows. Cleaves the GlcNAc-Asn bond which joins oligosaccharides to the peptide of asparagine-linked glycoproteins. The protein is N(4)-(beta-N-acetylglucosaminyl)-L-asparaginase (Aga) of Mus musculus (Mouse).